The following is a 216-amino-acid chain: MKVFIDSGDIAEIKEAQSMGVVDGVTTNPSLLAKAGKPTKRAIAEICEVVDGPVSAEVVAVEKDAILREGRELAKIHRNVVVKVPLIDEGLKAARIFASEGIKTNVTLCFSAAQALLAAKAGATYVSPFVGRVDDAAGDGMDLVLQVVTIFRNYGFSTQVLTASIRHPVHFVQAAMIGSHAATMPLKVIKQLTRHPLTDVGLAQFLADAKKIPELV.

Lys-83 functions as the Schiff-base intermediate with substrate in the catalytic mechanism.

Belongs to the transaldolase family. Type 3B subfamily.

It is found in the cytoplasm. The catalysed reaction is D-sedoheptulose 7-phosphate + D-glyceraldehyde 3-phosphate = D-erythrose 4-phosphate + beta-D-fructose 6-phosphate. It participates in carbohydrate degradation; pentose phosphate pathway; D-glyceraldehyde 3-phosphate and beta-D-fructose 6-phosphate from D-ribose 5-phosphate and D-xylulose 5-phosphate (non-oxidative stage): step 2/3. Functionally, transaldolase is important for the balance of metabolites in the pentose-phosphate pathway. This is Probable transaldolase from Sorangium cellulosum (strain So ce56) (Polyangium cellulosum (strain So ce56)).